A 119-amino-acid polypeptide reads, in one-letter code: Large ribosomal subunit protein bL20 (119 aa).

This sequence belongs to the bacterial ribosomal protein bL20 family.

Functionally, binds directly to 23S ribosomal RNA and is necessary for the in vitro assembly process of the 50S ribosomal subunit. It is not involved in the protein synthesizing functions of that subunit. In Verminephrobacter eiseniae (strain EF01-2), this protein is Large ribosomal subunit protein bL20.